The primary structure comprises 324 residues: Fructose-1,6-bisphosphatase class 1 (324 aa).

Glu88, Asp107, Leu109, and Asp110 together coordinate Mg(2+). Residues 110 to 113 (DGSS), Asn199, and Lys265 each bind substrate. Glu271 contributes to the Mg(2+) binding site.

This sequence belongs to the FBPase class 1 family. In terms of assembly, homotetramer. It depends on Mg(2+) as a cofactor.

The protein localises to the cytoplasm. The enzyme catalyses beta-D-fructose 1,6-bisphosphate + H2O = beta-D-fructose 6-phosphate + phosphate. The protein operates within carbohydrate biosynthesis; gluconeogenesis. The sequence is that of Fructose-1,6-bisphosphatase class 1 from Neisseria meningitidis serogroup B (strain ATCC BAA-335 / MC58).